Consider the following 545-residue polypeptide: CTP synthase (545 aa).

Residues 1 to 266 (MTTNYIFVTG…DDYICKRFSL (266 aa)) are amidoligase domain. Ser-14 is a CTP binding site. Ser-14 is a UTP binding site. ATP is bound by residues 15–20 (SLGKGI) and Asp-72. Mg(2+) contacts are provided by Asp-72 and Glu-140. CTP-binding positions include 147-149 (DIE), 187-192 (KTKPTQ), and Lys-223. UTP-binding positions include 187–192 (KTKPTQ) and Lys-223. 239-241 (KDV) is a binding site for ATP. A Glutamine amidotransferase type-1 domain is found at 291–542 (TIGMVGKYIE…VKAASEYQKR (252 aa)). Gly-352 contributes to the L-glutamine binding site. The active-site Nucleophile; for glutamine hydrolysis is Cys-379. L-glutamine is bound by residues 380–383 (LGMQ), Glu-403, and Arg-470. Catalysis depends on residues His-515 and Glu-517.

The protein belongs to the CTP synthase family. As to quaternary structure, homotetramer.

It catalyses the reaction UTP + L-glutamine + ATP + H2O = CTP + L-glutamate + ADP + phosphate + 2 H(+). It carries out the reaction L-glutamine + H2O = L-glutamate + NH4(+). The catalysed reaction is UTP + NH4(+) + ATP = CTP + ADP + phosphate + 2 H(+). It functions in the pathway pyrimidine metabolism; CTP biosynthesis via de novo pathway; CTP from UDP: step 2/2. Allosterically activated by GTP, when glutamine is the substrate; GTP has no effect on the reaction when ammonia is the substrate. The allosteric effector GTP functions by stabilizing the protein conformation that binds the tetrahedral intermediate(s) formed during glutamine hydrolysis. Inhibited by the product CTP, via allosteric rather than competitive inhibition. Catalyzes the ATP-dependent amination of UTP to CTP with either L-glutamine or ammonia as the source of nitrogen. Regulates intracellular CTP levels through interactions with the four ribonucleotide triphosphates. The chain is CTP synthase from Cronobacter sakazakii (strain ATCC BAA-894) (Enterobacter sakazakii).